The following is a 114-amino-acid chain: Superoxide dismutase [Cu-Zn] (114 aa).

Cu cation is bound by residues H37, H39, and H54. A disordered region spans residues C48–E68. Zn(2+)-binding residues include H54, H62, H71, and D74. Over residues R58 to E68 the composition is skewed to basic and acidic residues. H111 contacts Cu cation.

This sequence belongs to the Cu-Zn superoxide dismutase family. Homodimer. Requires Cu cation as cofactor. Zn(2+) is required as a cofactor.

The protein resides in the cytoplasm. It carries out the reaction 2 superoxide + 2 H(+) = H2O2 + O2. Its function is as follows. Destroys radicals which are normally produced within the cells and which are toxic to biological systems. The chain is Superoxide dismutase [Cu-Zn] from Drosophila miranda (Fruit fly).